The sequence spans 274 residues: Large ribosomal subunit protein uL2 (274 aa).

Disordered regions lie at residues 21–59 (KVGLSKDEPEKSLTSGKKSSGGRNNHGRITTRHRGGGHK) and 223–274 (VAMN…QLKG). The span at 32–42 (SLTSGKKSSGG) shows a compositional bias: low complexity. The segment covering 45–59 (NHGRITTRHRGGGHK) has biased composition (basic residues). Positions 263-274 (KSSDKYIKQLKG) are enriched in basic and acidic residues.

It belongs to the universal ribosomal protein uL2 family. Part of the 50S ribosomal subunit. Forms a bridge to the 30S subunit in the 70S ribosome.

One of the primary rRNA binding proteins. Required for association of the 30S and 50S subunits to form the 70S ribosome, for tRNA binding and peptide bond formation. It has been suggested to have peptidyltransferase activity; this is somewhat controversial. Makes several contacts with the 16S rRNA in the 70S ribosome. The polypeptide is Large ribosomal subunit protein uL2 (Wolbachia sp. subsp. Drosophila simulans (strain wRi)).